Reading from the N-terminus, the 2264-residue chain is Protein Ycf2 (2264 aa).

Gly-1611–Ser-1618 provides a ligand contact to ATP.

This sequence belongs to the Ycf2 family.

Its subcellular location is the plastid. It localises to the chloroplast stroma. Its function is as follows. Probable ATPase of unknown function. Its presence in a non-photosynthetic plant (Epifagus virginiana) and experiments in tobacco indicate that it has an essential function which is probably not related to photosynthesis. In Lactuca sativa (Garden lettuce), this protein is Protein Ycf2.